A 106-amino-acid polypeptide reads, in one-letter code: Pyrimidine/purine nucleoside phosphorylase (106 aa).

This sequence belongs to the nucleoside phosphorylase PpnP family.

It catalyses the reaction a purine D-ribonucleoside + phosphate = a purine nucleobase + alpha-D-ribose 1-phosphate. The enzyme catalyses adenosine + phosphate = alpha-D-ribose 1-phosphate + adenine. It carries out the reaction cytidine + phosphate = cytosine + alpha-D-ribose 1-phosphate. The catalysed reaction is guanosine + phosphate = alpha-D-ribose 1-phosphate + guanine. It catalyses the reaction inosine + phosphate = alpha-D-ribose 1-phosphate + hypoxanthine. The enzyme catalyses thymidine + phosphate = 2-deoxy-alpha-D-ribose 1-phosphate + thymine. It carries out the reaction uridine + phosphate = alpha-D-ribose 1-phosphate + uracil. The catalysed reaction is xanthosine + phosphate = alpha-D-ribose 1-phosphate + xanthine. In terms of biological role, catalyzes the phosphorolysis of diverse nucleosides, yielding D-ribose 1-phosphate and the respective free bases. Can use uridine, adenosine, guanosine, cytidine, thymidine, inosine and xanthosine as substrates. Also catalyzes the reverse reactions. In Burkholderia cenocepacia (strain ATCC BAA-245 / DSM 16553 / LMG 16656 / NCTC 13227 / J2315 / CF5610) (Burkholderia cepacia (strain J2315)), this protein is Pyrimidine/purine nucleoside phosphorylase.